Reading from the N-terminus, the 307-residue chain is Sex-lethal homolog (307 aa).

2 consecutive RRM domains span residues 85 to 163 and 171 to 251; these read TNLI…YARP and TNLY…LAEE. The segment covering 285–299 has biased composition (basic residues); it reads HRGRHNKNRNQKPHP. Positions 285–307 are disordered; sequence HRGRHNKNRNQKPHPYHNPQKFI.

Its subcellular location is the nucleus. Functionally, unknown; apparently not involved in somatic sex determination. This Chrysomya rufifacies (Hairy maggot blowfly) protein is Sex-lethal homolog (SXL).